Reading from the N-terminus, the 199-residue chain is Protein GrpE (199 aa).

Residues 1–27 (MSEQNTNHESPEQNVAHDNIEHSDSIL) are disordered. The span at 18-27 (DNIEHSDSIL) shows a compositional bias: basic and acidic residues.

The protein belongs to the GrpE family. Homodimer.

The protein localises to the cytoplasm. Its function is as follows. Participates actively in the response to hyperosmotic and heat shock by preventing the aggregation of stress-denatured proteins, in association with DnaK and GrpE. It is the nucleotide exchange factor for DnaK and may function as a thermosensor. Unfolded proteins bind initially to DnaJ; upon interaction with the DnaJ-bound protein, DnaK hydrolyzes its bound ATP, resulting in the formation of a stable complex. GrpE releases ADP from DnaK; ATP binding to DnaK triggers the release of the substrate protein, thus completing the reaction cycle. Several rounds of ATP-dependent interactions between DnaJ, DnaK and GrpE are required for fully efficient folding. The polypeptide is Protein GrpE (Psychrobacter sp. (strain St1)).